An 83-amino-acid polypeptide reads, in one-letter code: Snake venom metalloproteinase BnP1 (83 aa).

Residues 8–83 (SYIELAVVAD…NPQCIINQPI (76 aa)) enclose the Peptidase M12B domain. Positions 11, 77, and 80 each coordinate Ca(2+).

Belongs to the venom metalloproteinase (M12B) family. P-I subfamily. In terms of assembly, monomer. Requires Zn(2+) as cofactor. Expressed by the venom gland.

The protein localises to the secreted. With respect to regulation, inhibited by EDTA. This protein is a zinc protease from snake venom that is devoid of significant myotoxic and hemorrhagic activities. It hydrolyzes the Aalpha-chain and more slowly the Bbeta-chain of fibrin and fibrinogen, without affecting the gamma-chains. It induces cell detachment and a apoptosis (anoikis) in endothelial cells. The polypeptide is Snake venom metalloproteinase BnP1 (Bothrops pauloensis (Neuwied's lancehead)).